A 936-amino-acid chain; its full sequence is VPS35 endosomal protein-sorting factor-like (936 aa).

Disordered regions lie at residues 43–69 (SKTK…VDPL) and 87–113 (DPAA…VGPD). Residues 51-69 (KGSTSSTSSSSSSSVVDPL) show a composition bias toward low complexity. Serine 265 is modified (phosphoserine). Residues 672-692 (AFVRACVAYCFITIPSLVGIF) traverse the membrane as a helical segment.

Belongs to the VPS35L family. Component of the heterotrimeric retriever complex formed by VPS26C, VPS29 and VPS35L. Interacts with VPS29. Interacts with COMMD1, CCDC93 and CCDC22; associates with the CCC (COMMD/CCDC22/CCDC93) complex which contains at least COMMD1 (and possibly other COMM domain-containing proteins), CCDC22 and CCDC93. Interacts with WASHC1, WASHC2A and WASHC2C. Interacts with SNX17 and SNX31.

Its subcellular location is the membrane. The protein localises to the endosome. Functionally, acts as a component of the retriever complex. The retriever complex is a heterotrimeric complex related to retromer cargo-selective complex (CSC) and essential for retromer-independent retrieval and recycling of numerous cargos such as integrin alpha-5/beta-1 (ITGA5:ITGB1). The recruitment of the retriever complex to the endosomal membrane involves CCC and WASH complexes. In the endosomes, drives the retrieval and recycling of NxxY-motif-containing cargo proteins by coupling to SNX17, a cargo essential for the homeostatic maintenance of numerous cell surface proteins associated with processes that include cell migration, cell adhesion, nutrient supply and cell signaling. Involved in copper-dependent ATP7A trafficking between the trans-Golgi network and vesicles in the cell periphery; the function is proposed to depend on its association with the CCC complex and cooperation with the WASH complex on early endosomes. Seems not to be required for CCC complex stability. The polypeptide is VPS35 endosomal protein-sorting factor-like (Rattus norvegicus (Rat)).